We begin with the raw amino-acid sequence, 727 residues long: C-terminal-binding protein 1 (727 aa).

A THAP-type zinc finger spans residues 5-60 (CGFPNCKFRSRYRGLEDNRHFYRIPKRPLILRQRWLTAIGRTEETVVSQLRICSAH). The tract at residues 64–158 (GEKKEGDIPV…HPPVLPDPQQ (95 aa)) is disordered. The span at 77 to 94 (TVDKQIKIELPPKESKNS) shows a compositional bias: basic and acidic residues. Residues Tyr-251, 331-336 (LGCGRV), Asp-355, 388-394 (CNLGDET), 415-417 (TSH), Asp-441, and 467-470 (HSAW) contribute to the NAD(+) site. Low complexity predominate over residues 587–613 (ANAQRGSPANRSSRSSPSPHTNKSSVS). Disordered regions lie at residues 587–629 (ANAQ…SPAA) and 652–681 (APNGDSGASTADSGIEGGDKEKVQSDGDEN).

It belongs to the D-isomer specific 2-hydroxyacid dehydrogenase family. In terms of assembly, homodimer.

In terms of biological role, binds DNA and represses gene expression. Plays a role in regulation of life span, possibly by regulating transcription of genes important for lipid metabolism. The polypeptide is C-terminal-binding protein 1 (Caenorhabditis elegans).